We begin with the raw amino-acid sequence, 273 residues long: 4-hydroxy-tetrahydrodipicolinate reductase (273 aa).

12 to 17 (GAAGRM) is an NAD(+) binding site. NADP(+) is bound at residue R39. NAD(+) is bound by residues 102–104 (GTT) and 126–129 (AANF). The Proton donor/acceptor role is filled by H159. H160 contacts (S)-2,3,4,5-tetrahydrodipicolinate. K163 (proton donor) is an active-site residue. 169–170 (GT) is a binding site for (S)-2,3,4,5-tetrahydrodipicolinate.

It belongs to the DapB family. Homotetramer.

It localises to the cytoplasm. The catalysed reaction is (S)-2,3,4,5-tetrahydrodipicolinate + NAD(+) + H2O = (2S,4S)-4-hydroxy-2,3,4,5-tetrahydrodipicolinate + NADH + H(+). It catalyses the reaction (S)-2,3,4,5-tetrahydrodipicolinate + NADP(+) + H2O = (2S,4S)-4-hydroxy-2,3,4,5-tetrahydrodipicolinate + NADPH + H(+). It functions in the pathway amino-acid biosynthesis; L-lysine biosynthesis via DAP pathway; (S)-tetrahydrodipicolinate from L-aspartate: step 4/4. Catalyzes the conversion of 4-hydroxy-tetrahydrodipicolinate (HTPA) to tetrahydrodipicolinate. This chain is 4-hydroxy-tetrahydrodipicolinate reductase, found in Erwinia tasmaniensis (strain DSM 17950 / CFBP 7177 / CIP 109463 / NCPPB 4357 / Et1/99).